We begin with the raw amino-acid sequence, 218 residues long: Ribose-5-phosphate isomerase A (218 aa).

Substrate-binding positions include 28-31 (TGST), 81-84 (DGAD), and 94-97 (KGGG). The active-site Proton acceptor is the Glu103. Position 121 (Lys121) interacts with substrate.

It belongs to the ribose 5-phosphate isomerase family. As to quaternary structure, homodimer.

It catalyses the reaction aldehydo-D-ribose 5-phosphate = D-ribulose 5-phosphate. The protein operates within carbohydrate degradation; pentose phosphate pathway; D-ribose 5-phosphate from D-ribulose 5-phosphate (non-oxidative stage): step 1/1. In terms of biological role, catalyzes the reversible conversion of ribose-5-phosphate to ribulose 5-phosphate. The protein is Ribose-5-phosphate isomerase A of Alcanivorax borkumensis (strain ATCC 700651 / DSM 11573 / NCIMB 13689 / SK2).